Reading from the N-terminus, the 191-residue chain is Large ribosomal subunit protein uL5 (191 aa).

The protein belongs to the universal ribosomal protein uL5 family. As to quaternary structure, part of the 50S ribosomal subunit; part of the 5S rRNA/L5/L18/L25 subcomplex. Contacts the 5S rRNA and the P site tRNA. Forms a bridge to the 30S subunit in the 70S ribosome.

Functionally, this is one of the proteins that bind and probably mediate the attachment of the 5S RNA into the large ribosomal subunit, where it forms part of the central protuberance. In the 70S ribosome it contacts protein S13 of the 30S subunit (bridge B1b), connecting the 2 subunits; this bridge is implicated in subunit movement. Contacts the P site tRNA; the 5S rRNA and some of its associated proteins might help stabilize positioning of ribosome-bound tRNAs. This is Large ribosomal subunit protein uL5 from Salinibacter ruber (strain DSM 13855 / M31).